Consider the following 592-residue polypeptide: Aspartate--tRNA ligase (592 aa).

Glu-171 serves as a coordination point for L-aspartate. Residues 195–198 (QLFK) are aspartate. Position 217 (Arg-217) interacts with L-aspartate. ATP-binding positions include 217-219 (RDE) and Gln-226. His-448 contributes to the L-aspartate binding site. Glu-482 provides a ligand contact to ATP. Residue Arg-489 participates in L-aspartate binding. An ATP-binding site is contributed by 534-537 (GLDR).

Belongs to the class-II aminoacyl-tRNA synthetase family. Type 1 subfamily. Homodimer.

The protein resides in the cytoplasm. It catalyses the reaction tRNA(Asp) + L-aspartate + ATP = L-aspartyl-tRNA(Asp) + AMP + diphosphate. Catalyzes the attachment of L-aspartate to tRNA(Asp) in a two-step reaction: L-aspartate is first activated by ATP to form Asp-AMP and then transferred to the acceptor end of tRNA(Asp). The polypeptide is Aspartate--tRNA ligase (Vibrio vulnificus (strain YJ016)).